Reading from the N-terminus, the 185-residue chain is Ribosome-recycling factor (185 aa).

Belongs to the RRF family.

It localises to the cytoplasm. Functionally, responsible for the release of ribosomes from messenger RNA at the termination of protein biosynthesis. May increase the efficiency of translation by recycling ribosomes from one round of translation to another. This is Ribosome-recycling factor from Proteus mirabilis (strain HI4320).